Reading from the N-terminus, the 871-residue chain is Dual O-methyltransferase/FAD-dependent monooxygenase CTB3 (871 aa).

The segment at 1–429 (MMQFQRDLEA…GLLTVRSAGQ (429 aa)) is O-methyltransferase. Asp279 lines the S-adenosyl-L-methionine pocket. Residue His331 is the Proton acceptor of the active site. The segment at 430–871 (TALSGTNTLT…NLVDCSEFVF (442 aa)) is FAD-dependent monooxygenase. FAD contacts are provided by Glu485, Arg569, Asp793, and Ala806.

This sequence in the C-terminal section; belongs to the paxM FAD-dependent monooxygenase family. It in the N-terminal section; belongs to the class I-like SAM-binding methyltransferase superfamily. Cation-independent O-methyltransferase family. COMT subfamily.

The enzyme catalyses nor-toralactone + S-adenosyl-L-methionine = toralactone + S-adenosyl-L-homocysteine + H(+). The catalysed reaction is toralactone + NADH + O2 + H(+) = 1-(3,4,5-trihydroxy-7-methoxynaphthalen-2-yl)propan-2-one + CO2 + NAD(+). Its pathway is mycotoxin biosynthesis. In terms of biological role, dual O-methyltransferase/FAD-dependent monooxygenase; part of the gene cluster that mediates the biosynthesis of cercosporin, a light-activated, non-host-selective toxin. The perylenequinone chromophore of cercosporin absorbs light energy to attain an electronically-activated triplet state and produces active oxygen species such as the hydroxyl radical, superoxide, hydrogen peroxide or singlet oxygen upon reaction with oxygen molecules. These reactive oxygen species cause damage to various cellular components including lipids, proteins and nucleic acids. The first step of cercosporin biosynthesis is performed by the polyketide synthase CTB1 which catalyzes the formation of nor-toralactone. The starter unit acyltransferase (SAT) domain of CTB1 initiates polyketide extension by the selective utilization of acetyl-CoA, which is elongated to the heptaketide in the beta-ketoacyl synthase (KS) domain by successive condensations with six malonyl units introduced by the malonyl acyltransferase (MAT) domain. The product template (PT) domain catalyzes C4-C9 and C2-C11 aldol cyclizations and dehydrations to a trihydroxynaphthalene, which is thought to be delivered to the thioesterase (TE) domain for product release. The bifunctional enzyme CTB3 then methylates nor-toralactone to toralactone before conducting an unusual oxidative aromatic ring opening. The O-methyltransferase CTB2 further methylates the nascent OH-6 of the CBT3 product, blocking further oxidation at this site before the reductase CTB6 reduces the 2-oxopropyl ketone at position C7, giving naphthalene. The FAD-dependent monooxygenase CTB5 in concert with the multicopper oxidase CTB12 are responsible for homodimerization of naphthalene with CTB7 installing the dioxepine moiety, finally producing cercosporin. The fasciclin domain-containing protein CTB11 might act with CTB5 and CTB12 whereas the roles of CTB9 and CTB10 have still to be elucidated. This chain is Dual O-methyltransferase/FAD-dependent monooxygenase CTB3, found in Cercospora beticola (Sugarbeet leaf spot fungus).